The sequence spans 225 residues: UPF0173 metal-dependent hydrolase Pcal_1074 (225 aa).

It belongs to the UPF0173 family.

The sequence is that of UPF0173 metal-dependent hydrolase Pcal_1074 from Pyrobaculum calidifontis (strain DSM 21063 / JCM 11548 / VA1).